The sequence spans 293 residues: tRNA-cytidine(32) 2-sulfurtransferase (293 aa).

Residues 62–67 (SGGKDS) carry the PP-loop motif motif. The [4Fe-4S] cluster site is built by Cys-137, Cys-140, and Cys-228.

Belongs to the TtcA family. Homodimer. The cofactor is Mg(2+). [4Fe-4S] cluster is required as a cofactor.

It localises to the cytoplasm. It carries out the reaction cytidine(32) in tRNA + S-sulfanyl-L-cysteinyl-[cysteine desulfurase] + AH2 + ATP = 2-thiocytidine(32) in tRNA + L-cysteinyl-[cysteine desulfurase] + A + AMP + diphosphate + H(+). It functions in the pathway tRNA modification. Functionally, catalyzes the ATP-dependent 2-thiolation of cytidine in position 32 of tRNA, to form 2-thiocytidine (s(2)C32). The sulfur atoms are provided by the cysteine/cysteine desulfurase (IscS) system. The protein is tRNA-cytidine(32) 2-sulfurtransferase of Brucella melitensis biotype 1 (strain ATCC 23456 / CCUG 17765 / NCTC 10094 / 16M).